The following is a 388-amino-acid chain: Na(+)/H(+) antiporter NhaA (388 aa).

A run of 12 helical transmembrane segments spans residues 8 to 28, 33 to 53, 59 to 79, 95 to 115, 125 to 145, 154 to 174, 179 to 199, 217 to 237, 259 to 279, 287 to 307, 328 to 348, and 363 to 383; these read FLKL…IALI, PLQG…FAAL, LLLW…GLEV, LFPV…YLLF, GWAI…ALLS, VFLL…IALF, VSLV…WMNW, VCIL…GFLI, VAYL…LNGV, ILPL…IFLF, IFAV…ISGL, and LGIL…LRMV.

Belongs to the NhaA Na(+)/H(+) (TC 2.A.33) antiporter family.

It localises to the cell inner membrane. The enzyme catalyses Na(+)(in) + 2 H(+)(out) = Na(+)(out) + 2 H(+)(in). Its function is as follows. Na(+)/H(+) antiporter that extrudes sodium in exchange for external protons. The polypeptide is Na(+)/H(+) antiporter NhaA (Photorhabdus laumondii subsp. laumondii (strain DSM 15139 / CIP 105565 / TT01) (Photorhabdus luminescens subsp. laumondii)).